A 308-amino-acid polypeptide reads, in one-letter code: UPF0282 protein M1425_2116 (308 aa).

It belongs to the UPF0282 family.

In Saccharolobus islandicus (strain M.14.25 / Kamchatka #1) (Sulfolobus islandicus), this protein is UPF0282 protein M1425_2116.